The sequence spans 129 residues: Transcription antitermination protein NusB (129 aa).

Belongs to the NusB family.

In terms of biological role, involved in transcription antitermination. Required for transcription of ribosomal RNA (rRNA) genes. Binds specifically to the boxA antiterminator sequence of the ribosomal RNA (rrn) operons. The polypeptide is Transcription antitermination protein NusB (Staphylococcus aureus (strain USA300 / TCH1516)).